The chain runs to 391 residues: Arginine biosynthesis bifunctional protein ArgJ 2 (391 aa).

The substrate site is built by Lys167 and Ser180. Ser180 acts as the Nucleophile in catalysis.

It belongs to the ArgJ family. In terms of assembly, heterotetramer of two alpha and two beta chains.

It is found in the cytoplasm. It catalyses the reaction N(2)-acetyl-L-ornithine + L-glutamate = N-acetyl-L-glutamate + L-ornithine. It carries out the reaction L-glutamate + acetyl-CoA = N-acetyl-L-glutamate + CoA + H(+). The protein operates within amino-acid biosynthesis; L-arginine biosynthesis; L-ornithine and N-acetyl-L-glutamate from L-glutamate and N(2)-acetyl-L-ornithine (cyclic): step 1/1. It participates in amino-acid biosynthesis; L-arginine biosynthesis; N(2)-acetyl-L-ornithine from L-glutamate: step 1/4. In terms of biological role, catalyzes two activities which are involved in the cyclic version of arginine biosynthesis: the synthesis of N-acetylglutamate from glutamate and acetyl-CoA as the acetyl donor, and of ornithine by transacetylation between N(2)-acetylornithine and glutamate. In Streptomyces clavuligerus, this protein is Arginine biosynthesis bifunctional protein ArgJ 2.